We begin with the raw amino-acid sequence, 127 residues long: Aspartate 1-decarboxylase (127 aa).

Residue S25 is the Schiff-base intermediate with substrate; via pyruvic acid of the active site. S25 carries the post-translational modification Pyruvic acid (Ser). Residue T57 coordinates substrate. Catalysis depends on Y58, which acts as the Proton donor. G73 to A75 provides a ligand contact to substrate.

The protein belongs to the PanD family. As to quaternary structure, heterooctamer of four alpha and four beta subunits. Requires pyruvate as cofactor. Is synthesized initially as an inactive proenzyme, which is activated by self-cleavage at a specific serine bond to produce a beta-subunit with a hydroxyl group at its C-terminus and an alpha-subunit with a pyruvoyl group at its N-terminus.

Its subcellular location is the cytoplasm. It catalyses the reaction L-aspartate + H(+) = beta-alanine + CO2. The protein operates within cofactor biosynthesis; (R)-pantothenate biosynthesis; beta-alanine from L-aspartate: step 1/1. Its function is as follows. Catalyzes the pyruvoyl-dependent decarboxylation of aspartate to produce beta-alanine. The protein is Aspartate 1-decarboxylase of Staphylococcus aureus (strain MSSA476).